Here is a 500-residue protein sequence, read N- to C-terminus: PLLVLDLIIQERGESFSHTVTAQHTSAKVEGLKAGTVYSVQVRARTVAGYGRYSNPVDFSTSLYVCPVSSSSTSMHLRRREELTTTTTGLKSREERFQKSDDPERSVQDLLPLIVGSASAGFVVILAMIVIAVVCLRRQRTGSELEYTEKLQQYVSPGVKVYIDPFTYEDPNEAVHEFAREIDISCVKIEEVIGAGEFGEVCRGRLKQAGRKETTVAIKTLKAGYTEHQRRDFLSEASIMGQFDHPNVIHLEGVLTRSCPVLIVTEFMENGALDSFLRLNDGRFTVTQLVGMLRGIAAGMKYLSDMNYVHRDLAARNVLVNSNLVCKVSDFGLSRFLDDNSSDPTYTSSLGGKIPIRWTAPEAIAFRKFTSASDVWSYGIVMWEVMSFGERPYWDMSNQDVMNAVEQDYRLPPPMDCPAVLHQLMLECWVKERNMRPRFGQIVSTLDKFLRNAASLKVLTSTHSGDLCRIGGTLPGHQRKSIGDAQDIKQQMSQTLPIRV.

The region spanning 1–64 (PLLVLDLIIQ…NPVDFSTSLY (64 aa)) is the Fibronectin type-III domain. At 1–113 (PLLVLDLIIQ…ERSVQDLLPL (113 aa)) the chain is on the extracellular side. The disordered stretch occupies residues 76–103 (HLRRREELTTTTTGLKSREERFQKSDDP). A compositionally biased stretch (basic and acidic residues) spans 91–103 (KSREERFQKSDDP). Residues 114 to 134 (IVGSASAGFVVILAMIVIAVV) form a helical membrane-spanning segment. Topologically, residues 135–500 (CLRRQRTGSE…QMSQTLPIRV (366 aa)) are cytoplasmic. Tyr-168 is subject to Phosphotyrosine; by autocatalysis. The Protein kinase domain occupies 187–450 (VKIEEVIGAG…QIVSTLDKFL (264 aa)). Residues 193-201 (IGAGEFGEV) and Lys-219 contribute to the ATP site. Residue Asp-312 is the Proton acceptor of the active site. The SAM domain occupies 421–500 (LHQLMLECWV…QMSQTLPIRV (80 aa)). The PDZ-binding motif lies at 498–500 (IRV).

The protein belongs to the protein kinase superfamily. Tyr protein kinase family. Ephrin receptor subfamily. As to quaternary structure, heterotetramer upon binding of the ligand. The heterotetramer is composed of an ephrin dimer and a receptor dimer. Oligomerization is probably required to induce biological responses. Post-translationally, phosphorylated. Autophosphorylates upon ligand-binding. Autophosphorylation on Tyr-168 is required for interaction with SH2 domain-containing proteins. As to expression, widely expressed in the developing nervous system.

Its subcellular location is the cell membrane. The protein resides in the cell projection. The protein localises to the dendrite. The catalysed reaction is L-tyrosyl-[protein] + ATP = O-phospho-L-tyrosyl-[protein] + ADP + H(+). Functionally, receptor tyrosine kinase which binds promiscuously transmembrane ephrin-B family ligands residing on adjacent cells, leading to contact-dependent bidirectional signaling into neighboring cells. The signaling pathway downstream of the receptor is referred to as forward signaling while the signaling pathway downstream of the ephrin ligand is referred to as reverse signaling. Generally has an overlapping and redundant function with EPHB2. Like EPHB2, functions in axon guidance during development. In addition to its role in axon guidance also plays an important redundant role with other ephrin-B receptors in development and maturation of dendritic spines and the formation of excitatory synapses. May control other aspects of development through regulation of cell migration and positioning. May play a role in early pattern formation within the developing nervous system. The protein is Ephrin type-B receptor 3 (ephb3) of Danio rerio (Zebrafish).